Here is a 120-residue protein sequence, read N- to C-terminus: Autophagy-related protein 8d (120 aa).

Gly117 carries Phosphatidylethanolamine amidated glycine lipidation. A propeptide spans 118 to 120 (IFF) (removed in mature form).

This sequence belongs to the ATG8 family. In terms of assembly, interacts with ATG4B. Interacts with NBR1. In terms of processing, the C-terminal 3 residues are removed by ATG4 to expose Gly-117 at the C-terminus. This Gly-117 forms then a thioester bond with the 'Cys-558' of ATG7 (E1-like activating enzyme) before being transferred to the 'Cys-258' of ATG3 (the specific E2 conjugating enzyme), in order to be finally amidated with phosphatidylethanolamine. This lipid modification anchors ATG8 to autophagosomes. Constitutively expressed.

The protein localises to the cytoplasmic vesicle. It localises to the autophagosome membrane. The protein resides in the vacuole membrane. Its subcellular location is the cytoplasm. It is found in the cytoskeleton. Ubiquitin-like modifier involved in autophagosomes formation. May mediate the delivery of the autophagosomes to the vacuole via the microtubule cytoskeleton. This chain is Autophagy-related protein 8d (ATG8D), found in Arabidopsis thaliana (Mouse-ear cress).